The chain runs to 721 residues: Dolichyl-diphosphooligosaccharide--protein glycosyltransferase subunit STT3B (721 aa).

The Cytoplasmic segment spans residues M1–E25. Residues L26–F46 form a helical membrane-spanning segment. Residues S47–T129 are Lumenal-facing. The DXD motif 1 motif lies at E57–D59. Position 59 (D59) interacts with Mn(2+). The helical transmembrane segment at A130–I148 threads the bilayer. The Cytoplasmic segment spans residues W149–D150. The helical transmembrane segment at S151–I168 threads the bilayer. The Lumenal portion of the chain corresponds to S169–E179. Mn(2+) contacts are provided by D177 and E179. The DXD motif 2 signature appears at D177–E179. The helical transmembrane segment at G180–T199 threads the bilayer. Residues G200–S201 lie on the Cytoplasmic side of the membrane. The chain crosses the membrane as a helical span at residues L202–V216. Topologically, residues S217 to G221 are lumenal. Residues Y222–V238 form a helical membrane-spanning segment. Topologically, residues T239–S243 are cytoplasmic. The helical transmembrane segment at Q244–F269 threads the bilayer. Over Q270–H277 the chain is Lumenal. Residues M278–K297 traverse the membrane as a helical segment. The Cytoplasmic portion of the chain corresponds to Y298 to T313. Residues L314–I334 traverse the membrane as a helical segment. Topologically, residues S335–A367 are lumenal. Residues S359 to E362 carry the SVSE motif motif. Residues W368–F390 traverse the membrane as a helical segment. Topologically, residues K391–A396 are cytoplasmic. A helical transmembrane segment spans residues T397–V413. The Lumenal segment spans residues M414–L417. R416 serves as a coordination point for dolichyl diphosphooligosaccharide. The chain crosses the membrane as a helical span at residues I418–N439. Residues L440 to Q471 lie on the Cytoplasmic side of the membrane. Residues S472–S492 form a helical membrane-spanning segment. The Lumenal segment spans residues R493 to S721. Positions W548–D550 are interacts with target acceptor peptide in protein substrate. The short motif at W548 to G552 is the WWDYG motif element. Y553 serves as a coordination point for dolichyl diphosphooligosaccharide. N560 and N567 each carry an N-linked (GlcNAc...) asparagine glycan. N571 carries an N-linked (GlcNAc...) (high mannose) asparagine glycan. Residues D615–M622 carry the DK motif motif.

It belongs to the STT3 family. Component of the oligosaccharyltransferase (OST) complex. Requires Mg(2+) as cofactor. Mn(2+) serves as cofactor.

Its subcellular location is the endoplasmic reticulum membrane. It catalyses the reaction a di-trans,poly-cis-dolichyl diphosphooligosaccharide + L-asparaginyl-[protein] = N(4)-(oligosaccharide-(1-&gt;4)-N-acetyl-beta-D-glucosaminyl-(1-&gt;4)-N-acetyl-beta-D-glucosaminyl)-L-asparaginyl-[protein] + a di-trans,poly-cis-dolichyl diphosphate + H(+). It functions in the pathway protein modification; protein glycosylation. Catalytic subunit of the oligosaccharyl transferase (OST) complex that catalyzes the initial transfer of a defined glycan (Glc(3)Man(9)GlcNAc(2) in eukaryotes) from the lipid carrier dolichol-pyrophosphate to an asparagine residue within an Asn-X-Ser/Thr consensus motif in nascent polypeptide chains, the first step in protein N-glycosylation. N-glycosylation occurs cotranslationally and the complex associates with the Sec61 complex at the channel-forming translocon complex that mediates protein translocation across the endoplasmic reticulum (ER). All subunits are required for a maximal enzyme activity. This subunit contains the active site and the acceptor peptide and donor lipid-linked oligosaccharide (LLO) binding pockets. This is Dolichyl-diphosphooligosaccharide--protein glycosyltransferase subunit STT3B (STT3B) from Oryza sativa subsp. japonica (Rice).